Here is a 440-residue protein sequence, read N- to C-terminus: Tetratricopeptide repeat protein 5 (440 aa).

5 TPR repeats span residues 7 to 61, 68 to 98, 103 to 130, 136 to 174, and 179 to 216; these read EEAK…EEVL, AQAL…AVKL, VEAW…SGAL, KVSL…AVQM, and GRSW…AEKV. The Nuclear export signal motif lies at 13–24; it reads LQKLQGLVDRLY. Position 203 is a phosphoserine; by ATM (Ser203). A Phosphoserine; by CHEK2 modification is found at Ser221. The TPR 6 repeat unit spans residues 224-253; sequence PDLHLNRATLHKYEESYGEALEGFSQAAAL. Positions 285–287 are mediates interaction with 28S rRNA of ribosome-coding tubulin; that stretch reads KPK.

As to quaternary structure, interacts with JMY and p300/EP300; the interaction occurs in the nucleus and augments the association between JMY and p300/EP300 in response to DNA damage. Interacts with PRMT5; the interaction is DNA damage-dependent and promotes PRMT5 interaction with p53/TP53 and subsequent methylation. Forms a complex with HSF1 and p300/EP300; these interactions augment chromatin-bound HSF1 and p300/EP300 histone acetyltransferase activity, resulting in enhanced heat-shock-responsive transcription. Interacts with JMY; the interaction occurs in the cytoplasm and results in the inhibition of JYM's nucleation activity. Interacts with ribosome-coding tubulin (via 60S subunit 28S rRNA and protein uL24/RPL26) and the N-terminal of nascent tubulin polypeptide (via alpha-tubulin MREC motif and beta-tubulin MREI motif); these interactions result in tubulin mRNA-targeted degradation. Interacts with ATP5F1B; the interaction occurs in the mitochondria and results in ATP production decrease. Interacts with p53/TP53; the interaction occurs in the mitochondria and results in increased apoptosis. In terms of processing, phosphorylation by ATM kinase induces nuclear accumulation while interfering with nuclear export, and phosphorylation by CHEK2 kinase enhances nuclear stability. Expressed in heart, brain, spleen, lung, liver, skeletal muscle, kidney and testis.

The protein localises to the nucleus. Its subcellular location is the cytoplasm. The protein resides in the cytoplasmic vesicle. It localises to the mitochondrion matrix. Cofactor involved in the regulation of various cellular mechanisms such as actin regulation, autophagy, chromatin regulation and DNA repair. In physiological conditions, interacts with cofactor JMY in the cytoplasm which prevents JMY's actin nucleation activity and ability to activate the Arp2/3 complex. Acts as a negative regulator of nutrient stress-induced autophagy by inhibiting JMY's interaction with MAP1LC3B, thereby preventing autophagosome formation. Involves in tubulin autoregulation by promoting its degradation in response to excess soluble tubulin. To do so, associates with the active ribosome near the ribosome exit tunnel and with nascent tubulin polypeptides early during their translation, triggering tubulin mRNA-targeted degradation. Following DNA damage, phosphorylated by DNA damage responsive protein kinases ATM and CHEK2, leading to its nuclear accumulation and stability. Nuclear TTC5/STRAP promotes the assembly of a stress-responsive p53/TP53 coactivator complex, which includes the coactivators JMY and p300, thereby increasing p53/TP53-dependent transcription and apoptosis. Also recruits arginine methyltransferase PRMT5 to p53/TP53 when DNA is damaged, allowing PRMT5 to methylate p53/TP53. In DNA stress conditions, also prevents p53/TP53 degradation by E3 ubiquitin ligase MDM2. Upon heat-shock stress, forms a chromatin-associated complex with heat-shock factor 1 HSF1 and p300/EP300 to stimulate heat-shock-responsive transcription, thereby increasing cell survival. Mitochondrial TTC5/STRAP interacts with ATP synthase subunit beta ATP5F1B which decreased ATP synthase activity and lowers mitochondrial ATP production, thereby regulating cellular respiration and mitochondrial-dependent apoptosis. Mitochondrial TTC5/STRAP also regulates p53/TP53-mediated apoptosis. The chain is Tetratricopeptide repeat protein 5 from Mus musculus (Mouse).